The chain runs to 1323 residues: Clustered mitochondria protein homolog (1323 aa).

Residues 103–141 (KEKPYNLAAIYDHLNKFREVIGLHFLDKYSSEVGVLSGV) form a TPR 1 repeat. Residues 149–186 (LQDVKETEPETQDDKDKETDETKSTKEDSNQTEEKKSE) are disordered. Residues 150–186 (QDVKETEPETQDDKDKETDETKSTKEDSNQTEEKKSE) are compositionally biased toward basic and acidic residues. A Clu domain is found at 351-608 (FANQPDASRS…RATPLDIEFI (258 aa)). Residues 530–563 (CYGLSTDGSKIFSDSSFENVLKPIAEAFHLKPHP) form a TPR 2 repeat. Over residues 764–801 (NEEEISKRKEESEKKATEGKDQDKEEEKANDNEKNKED) the composition is skewed to basic and acidic residues. The segment at 764–808 (NEEEISKRKEESEKKATEGKDQDKEEEKANDNEKNKEDDKEEVSN) is disordered. TPR repeat units lie at residues 1042 to 1076 (LSVY…KSEA), 1099 to 1132 (ITAY…WTLV), 1141 to 1174 (VNTY…STKL), and 1183 to 1216 (GMLR…FTKF). The segment at 1250–1323 (KALAQQASAS…KKSNNKKSKK (74 aa)) is disordered. Basic residues predominate over residues 1308 to 1323 (PKKQLKKKSNNKKSKK).

It belongs to the CLU family. As to quaternary structure, may associate with the eukaryotic translation initiation factor 3 (eIF-3) complex.

Its subcellular location is the cytoplasm. MRNA-binding protein involved in proper cytoplasmic distribution of mitochondria. The chain is Clustered mitochondria protein homolog from Debaryomyces hansenii (strain ATCC 36239 / CBS 767 / BCRC 21394 / JCM 1990 / NBRC 0083 / IGC 2968) (Yeast).